A 395-amino-acid polypeptide reads, in one-letter code: MERIAVLAYSGGLDTSCCLKLLEDKYGYKVVSVCVDVGQPEEEIKEVEEKAKKLGVLKHYTIDAKEEFVKDYIFRAIKANAMYEGYPLSTALARPLIAHKVVEIAEEVGAEAVAHGCTGKGNDQFRFETTIRIKAPHLKIIAPIRDLNLTRAEEIEYAKEKGIPIPTESKKYSIDENLWGRSIEGSELENPDFVPPEEIYAWTKNPVEDKEEEIVEIEFKEGVPVAINGEKLEPVELIKKANEIAGKHGVGRIDIIEDRIIGLKSRENYECPGAVLLLTAHKALEQLVLTRDELRFKEIVDSLYGELIYKGLWFDPLREDLDAFIDKTQERVTGTVKVKLFGGTARVVGRDSPYALYSKELVSFDEKEIDQKELAGMVKYHGLQAMLYEMRKKRK.

8–16 (AYSGGLDTS) lines the ATP pocket. Tyr-86 contributes to the L-citrulline binding site. Gly-116 lines the ATP pocket. Residues Thr-118, Asn-122, and Asp-123 each coordinate L-aspartate. L-citrulline is bound at residue Asn-122. Positions 126, 173, 182, 257, and 269 each coordinate L-citrulline.

Belongs to the argininosuccinate synthase family. Type 1 subfamily. Homotetramer.

It localises to the cytoplasm. The enzyme catalyses L-citrulline + L-aspartate + ATP = 2-(N(omega)-L-arginino)succinate + AMP + diphosphate + H(+). It participates in amino-acid biosynthesis; L-arginine biosynthesis; L-arginine from L-ornithine and carbamoyl phosphate: step 2/3. The protein is Argininosuccinate synthase of Methanocaldococcus jannaschii (strain ATCC 43067 / DSM 2661 / JAL-1 / JCM 10045 / NBRC 100440) (Methanococcus jannaschii).